Here is a 132-residue protein sequence, read N- to C-terminus: Agouti-signaling protein (132 aa).

The first 22 residues, 1–22 (MDVTRLLLATLLVFLCFFTAYS), serve as a signal peptide directing secretion. Asn-39 carries an N-linked (GlcNAc...) asparagine glycan. The tract at residues 58–88 (KSKQMSRKEAEKKRSSKKEASMKKVARPRTP) is disordered. A compositionally biased stretch (basic and acidic residues) spans 63 to 79 (SRKEAEKKRSSKKEASM). Cystine bridges form between Cys-93-Cys-108, Cys-100-Cys-114, Cys-107-Cys-125, Cys-111-Cys-132, and Cys-116-Cys-123. In terms of domain architecture, Agouti spans 93–132 (CVATRDSCKPPAPACCDPCASCQCRFFRSACSCRVLSLNC).

Its subcellular location is the secreted. Functionally, involved in the regulation of melanogenesis. The binding of ASP to MC1R precludes alpha-MSH initiated signaling and thus blocks production of cAMP, leading to a down-regulation of eumelanogenesis (brown/black pigment) and thus increasing synthesis of pheomelanin (yellow/red pigment). The protein is Agouti-signaling protein (ASIP) of Cercopithecus mitis (Blue monkey).